Here is a 391-residue protein sequence, read N- to C-terminus: Probable acridone synthase 3 (391 aa).

Residue Cys164 is part of the active site.

The protein belongs to the thiolase-like superfamily. Chalcone/stilbene synthases family.

The enzyme catalyses N-methylanthraniloyl-CoA + 3 malonyl-CoA + 3 H(+) = 1,3-dihydroxy-N-methylacridone + 3 CO2 + 4 CoA + H2O. The polypeptide is Probable acridone synthase 3 (ACS3) (Ruta graveolens (Common rue)).